A 494-amino-acid chain; its full sequence is Alpha-amylase B (494 aa).

An N-terminal signal peptide occupies residues 1–18 (MFLAKSIVCLALLAVANA). Position 19 is a pyrrolidone carboxylic acid (glutamine 19). Cysteines 46 and 102 form a disulfide. Ca(2+)-binding residues include asparagine 116, arginine 165, and aspartate 174. A disulfide bond links cysteine 153 and cysteine 167. Arginine 202 contacts chloride. Aspartate 204 functions as the Nucleophile in the catalytic mechanism. Histidine 208 provides a ligand contact to Ca(2+). Catalysis depends on glutamate 241, which acts as the Proton donor. Chloride contacts are provided by asparagine 304 and arginine 343. 2 cysteine pairs are disulfide-bonded: cysteine 376/cysteine 382 and cysteine 448/cysteine 460.

Belongs to the glycosyl hydrolase 13 family. Monomer. Ca(2+) is required as a cofactor. It depends on chloride as a cofactor.

The enzyme catalyses Endohydrolysis of (1-&gt;4)-alpha-D-glucosidic linkages in polysaccharides containing three or more (1-&gt;4)-alpha-linked D-glucose units.. The protein is Alpha-amylase B (Amy-d) of Drosophila yakuba (Fruit fly).